The primary structure comprises 908 residues: DNA mismatch repair protein MutS (908 aa).

Residue 659–666 (GPNMAGKS) participates in ATP binding.

It belongs to the DNA mismatch repair MutS family.

In terms of biological role, this protein is involved in the repair of mismatches in DNA. It is possible that it carries out the mismatch recognition step. This protein has a weak ATPase activity. This Parvibaculum lavamentivorans (strain DS-1 / DSM 13023 / NCIMB 13966) protein is DNA mismatch repair protein MutS.